A 345-amino-acid chain; its full sequence is Molybdate/tungstate-binding protein WtpA (345 aa).

The first 27 residues, 1–27, serve as a signal peptide directing secretion; sequence MREGGVMKKRLLALIVAFAVLTAGCLG. Residues 41–42, Ser75, 160–162, Glu218, and Tyr236 contribute to the molybdate site; these read GS and DPC. Tungstate-binding positions include 41 to 42, Ser75, 160 to 162, Glu218, and Tyr236; these read GS and DPC.

This sequence belongs to the bacterial solute-binding protein 1 family. WtpA subfamily. In terms of assembly, monomer. The complex is composed of two ATP-binding proteins (WtpC), two transmembrane proteins (WtpB) and a solute-binding protein (WtpA).

The protein resides in the cell membrane. Its function is as follows. Part of the ABC transporter complex WtpABC involved in molybdate/tungstate import. Binds tungstate and molybdate, with a preference for tungstate. The polypeptide is Molybdate/tungstate-binding protein WtpA (Pyrococcus furiosus (strain ATCC 43587 / DSM 3638 / JCM 8422 / Vc1)).